A 130-amino-acid chain; its full sequence is Small ribosomal subunit protein uS8 (130 aa).

The protein belongs to the universal ribosomal protein uS8 family.

This chain is Small ribosomal subunit protein uS8 (RPS22), found in Candida glabrata (strain ATCC 2001 / BCRC 20586 / JCM 3761 / NBRC 0622 / NRRL Y-65 / CBS 138) (Yeast).